The chain runs to 416 residues: 5-methylthioadenosine/S-adenosylhomocysteine deaminase 2 (416 aa).

Zn(2+)-binding residues include His58 and His60. Glu86 and His178 together coordinate substrate. His205 provides a ligand contact to Zn(2+). Residues Glu208 and Asp293 each coordinate substrate. Residue Asp293 coordinates Zn(2+).

Belongs to the metallo-dependent hydrolases superfamily. MTA/SAH deaminase family. Zn(2+) is required as a cofactor.

The enzyme catalyses S-adenosyl-L-homocysteine + H2O + H(+) = S-inosyl-L-homocysteine + NH4(+). It catalyses the reaction S-methyl-5'-thioadenosine + H2O + H(+) = S-methyl-5'-thioinosine + NH4(+). Functionally, catalyzes the deamination of 5-methylthioadenosine and S-adenosyl-L-homocysteine into 5-methylthioinosine and S-inosyl-L-homocysteine, respectively. Is also able to deaminate adenosine. In Archaeoglobus fulgidus (strain ATCC 49558 / DSM 4304 / JCM 9628 / NBRC 100126 / VC-16), this protein is 5-methylthioadenosine/S-adenosylhomocysteine deaminase 2.